Consider the following 428-residue polypeptide: Aerobic C4-dicarboxylate transport protein (428 aa).

Helical transmembrane passes span 5–27 (LFKS…GHYY), 47–64 (MIIA…IAGM), 77–99 (ALLY…VNVV), 141–163 (VIGA…FGFA), 184–206 (VIFG…AMAF), 216–238 (LVQL…VVVL), 289–311 (VVGL…YLTM), 326–348 (IFHQ…GVTG), and 353–375 (VLAA…ILGI).

The protein belongs to the dicarboxylate/amino acid:cation symporter (DAACS) (TC 2.A.23) family.

It localises to the cell inner membrane. Responsible for the transport of dicarboxylates such as succinate, fumarate, and malate from the periplasm across the inner membrane. The protein is Aerobic C4-dicarboxylate transport protein (dctA) of Salmonella typhimurium (strain LT2 / SGSC1412 / ATCC 700720).